A 166-amino-acid chain; its full sequence is Regulatory protein RecX (166 aa).

It belongs to the RecX family.

It is found in the cytoplasm. Modulates RecA activity. The sequence is that of Regulatory protein RecX from Salmonella choleraesuis (strain SC-B67).